Reading from the N-terminus, the 105-residue chain is Chloroacetanilide N-alkylformylase 2, ferredoxin component (105 aa).

Residues 2 to 105 (PKLVVVTREG…GLTVTIAPED (104 aa)) enclose the 2Fe-2S ferredoxin-type domain. [2Fe-2S] cluster is bound by residues cysteine 40, cysteine 46, cysteine 49, and cysteine 86.

This sequence belongs to the adrenodoxin/putidaredoxin family. In terms of assembly, the chloroacetanilide N-alkylformylase multicomponent enzyme system is composed of an oxygenase component (CndA) and an electron transfer component formed by a ferredoxin reductase (CndC1) and a ferredoxin (CndB1). In vitro, chloroacetanilide N-alkylformylase assays in which CndB1 is substituted for CndB2 demonstrate that the two enzymes possess nearly identical activities. It depends on [2Fe-2S] cluster as a cofactor.

Its function is as follows. Component of the chloroacetanilide N-alkylformylase multicomponent enzyme system involved in the degradation of chloroacetanilide herbicides (N-alkoxyalkyl-N-chloroacetyl-substituted aniline derivatives). In vitro, functions as an intermediate electron transfer protein. The protein is Chloroacetanilide N-alkylformylase 2, ferredoxin component of Rhizorhabdus wittichii (strain DC-6 / KACC 16600) (Sphingomonas wittichii).